The primary structure comprises 684 residues: Probable Xaa-Pro aminopeptidase P (684 aa).

Residues Asp481, Asp492, Glu590, and Glu604 each coordinate Mn(2+).

Belongs to the peptidase M24B family. Mn(2+) is required as a cofactor.

It carries out the reaction Release of any N-terminal amino acid, including proline, that is linked to proline, even from a dipeptide or tripeptide.. In terms of biological role, catalyzes the removal of a penultimate prolyl residue from the N-termini of peptides. The protein is Probable Xaa-Pro aminopeptidase P (ampp) of Neurospora crassa (strain ATCC 24698 / 74-OR23-1A / CBS 708.71 / DSM 1257 / FGSC 987).